Consider the following 338-residue polypeptide: Fructose-1,6-bisphosphatase 1 (338 aa).

A2 is subject to N-acetylalanine. AMP contacts are provided by residues 18 to 22 and 28 to 32; these read VMEEG and TGEMT. Residues D69 and E98 each coordinate Mg(2+). 113 to 114 serves as a coordination point for AMP; sequence KY. Mg(2+) contacts are provided by D119, L121, and D122. 122–125 contacts substrate; the sequence is DGSS. Position 141 (R141) interacts with AMP. K151 carries the N6-succinyllysine modification. Substrate contacts are provided by residues 213–216, 244–249, Y265, and 275–277; these read NEGY, RYVGSM, and KLR. 3 positions are modified to phosphotyrosine: Y216, Y245, and Y265. E281 is a Mg(2+) binding site.

This sequence belongs to the FBPase class 1 family. As to quaternary structure, homotetramer. Requires Mg(2+) as cofactor.

It catalyses the reaction beta-D-fructose 1,6-bisphosphate + H2O = beta-D-fructose 6-phosphate + phosphate. The protein operates within carbohydrate biosynthesis; gluconeogenesis. Subject to complex allosteric regulation. The enzyme can assume an active R-state, or an inactive T-state. Intermediate conformations may exist. AMP acts as an allosteric inhibitor. AMP binding affects the turnover of bound substrate and not the affinity for substrate. Fructose 2,6-bisphosphate acts as a competitive inhibitor. Fructose 2,6-bisphosphate and AMP have synergistic effects. Its function is as follows. Catalyzes the hydrolysis of fructose 1,6-bisphosphate to fructose 6-phosphate in the presence of divalent cations, acting as a rate-limiting enzyme in gluconeogenesis. Plays a role in regulating glucose sensing and insulin secretion of pancreatic beta-cells. Appears to modulate glycerol gluconeogenesis in liver. Important regulator of appetite and adiposity; increased expression of the protein in liver after nutrient excess increases circulating satiety hormones and reduces appetite-stimulating neuropeptides and thus seems to provide a feedback mechanism to limit weight gain. The polypeptide is Fructose-1,6-bisphosphatase 1 (FBP1) (Oryctolagus cuniculus (Rabbit)).